Consider the following 897-residue polypeptide: MSIINNILSKIVGSRNDRLIKVLYKTVNQITELESNMQALSDEQLKSKTQEFKDRLNKKETLNSILIEAFAVIREASIRVLDLRHHDVQLIGGIVLNNGNIAEMGTGEGKTLVATLPAYLNALNGKGVHIVTVNDYLAFRDAQWMGKVFNFLSMSVGIITSNMSYENKQVAYLCDIVYATNNELGFDYLRDNMAFTSEQKVQRMLNFAIVDEVDSILIDEARTPLIISGPTDDYAQIYQAINHMIPHFTKQIESGAGKEIVIEVAGDYTVDEKHKQVFLTDNGHGKAERLLIDAGALLEGVSLYDASNILLMQHINSALRAHILFQKNVDYIIQNDEVVIVDEFTGRTMLGRRWSEGLHQAIEAKERVSIKKENQTLASITFQNYFRLYRTLSGMTGTADTEAVEFQDIYGLETVVVPPNKPSTRVDKSDLIYLTTQEKFKAIALEVANCQKTGQPVLVGTSSIENSELISTLLEKNNIKHEVLNAKQHEREAIIIANAGSIGAVTIATNMAGRGTDIVLGGKLLEQATNKQKIDWQNRHDDVIKAGGLHIVGTERNESRRVDNQLRGRSARQGDVGSTRFYLSLEDNLMRIFASEKMSSTMQKLGMKKGESIEHKMVNRAIENAQRKVEGMNYDARKHLLEYDDVANDQRKVIYQLRDDLMSVNDVQDRFISIREKVIKQLFSDYISAELMEEDWNVEGFYNALKSDYSVDLPLQQWLNKGVDIDELQSRIIQGMSTICDYKEETVGTKPMREFEKAVMLKTIDHYWKEHLATMDYLRQSVNLRGYAQKNPMQEYKRESFAMFTSLLDTINIEIVKSLSNVTINENTDILDVEQQNNDDAQATHSNPNEQTKQASITNNIQTQTDQQNTYQRKEKKVGRNEPCPCGSGKKYKKCHG.

ATP-binding positions include Gln89, 107-111 (GEGKT), and Asp517. The span at 839-856 (DDAQATHSNPNEQTKQAS) shows a compositional bias: polar residues. The disordered stretch occupies residues 839 to 897 (DDAQATHSNPNEQTKQASITNNIQTQTDQQNTYQRKEKKVGRNEPCPCGSGKKYKKCHG). The segment covering 857-870 (ITNNIQTQTDQQNT) has biased composition (low complexity). Cys884, Cys886, Cys895, and His896 together coordinate Zn(2+).

The protein belongs to the SecA family. As to quaternary structure, monomer and homodimer. Part of the essential Sec protein translocation apparatus which comprises SecA, SecYEG and auxiliary proteins SecDF-YajC and YidC. The cofactor is Zn(2+).

Its subcellular location is the cell inner membrane. It is found in the cytoplasm. The catalysed reaction is ATP + H2O + cellular proteinSide 1 = ADP + phosphate + cellular proteinSide 2.. Part of the Sec protein translocase complex. Interacts with the SecYEG preprotein conducting channel. Has a central role in coupling the hydrolysis of ATP to the transfer of proteins into and across the cell membrane, serving as an ATP-driven molecular motor driving the stepwise translocation of polypeptide chains across the membrane. The protein is Protein translocase subunit SecA of Vesicomyosocius okutanii subsp. Calyptogena okutanii (strain HA).